Consider the following 791-residue polypeptide: Ribosome biogenesis protein ERB1 (791 aa).

Residues 1 to 12 are compositionally biased toward polar residues; that stretch reads MARKNSSLNGSE. Disordered regions lie at residues 1-60 and 68-87; these read MARK…DDSD and AEEE…SEEG. 2 stretches are compositionally biased toward acidic residues: residues 25 to 60 and 69 to 87; these read ESEL…DDSD and EEEN…SEEG. The segment at 254–372 is required for interaction with NOP7; that stretch reads RFVPSKHEAK…LRKVPGYSES (119 aa). The tract at residues 372-408 is required for interaction with YTM1; the sequence is SVRERFERSLDLYLAPRVRKNKLNIDPESLIPELPST. 7 WD repeats span residues 424–463, 472–512, 576–618, 621–659, 662–701, 705–744, and 760–791; these read GHKG…EVYQ, NNDD…FEIE, TCRK…TQSP, KSKG…LIKK, PGAR…TPYK, YHEK…DLMK, and VNSL…LWTT.

It belongs to the WD repeat BOP1/ERB1 family. As to quaternary structure, component of the NOP7 complex, composed of ERB1, NOP7 and YTM1. The complex is held together by ERB1, which interacts with NOP7 via its N-terminal domain and with YTM1 via a high-affinity interaction between the seven-bladed beta-propeller domains of the 2 proteins. The NOP7 complex associates with the 66S pre-ribosome.

The protein resides in the nucleus. It localises to the nucleolus. The protein localises to the nucleoplasm. In terms of biological role, component of the NOP7 complex, which is required for maturation of the 25S and 5.8S ribosomal RNAs and formation of the 60S ribosome. This Kluyveromyces lactis (strain ATCC 8585 / CBS 2359 / DSM 70799 / NBRC 1267 / NRRL Y-1140 / WM37) (Yeast) protein is Ribosome biogenesis protein ERB1.